The primary structure comprises 470 residues: TNF receptor-associated factor 4 (470 aa).

Residues 18–58 form an RING-type zinc finger; the sequence is CPLCGKPMREPVQVSTCGHRFCDTCLQEFLSEGVFKCPEDQ. 3 consecutive TRAF-type zinc fingers follow at residues 102-154, 155-208, and 209-266; these read HLNT…EAYE, SHEG…DTIQ, and SHQY…KLAM. Lys-263 is covalently cross-linked (Glycyl lysine isopeptide (Lys-Gly) (interchain with G-Cter in ubiquitin)). The stretch at 277-309 forms a coiled coil; the sequence is HLAMMCALVSRQRQELQELRRELEELSVGSDGV. Residues 307–462 enclose the MATH domain; sequence DGVLIWKIGS…DDAVFIRAAV (156 aa). At Ser-426 the chain carries Phosphoserine.

This sequence belongs to the TNF receptor-associated factor family. B subfamily. In terms of assembly, homotrimer. Interacts with LTBR/TNFRSF3, NGFR/TNFRSF16, RPS6KB1 and TGFB1I1. Interacts with SMURF1. Interacts (via TRAF domain) with MAP3K4 (via kinase domain). Interacts with NCF1, TICAM1, IRAK1 and TRAF6, and is probably part of a complex containing TRAF4, NCF1, TICAM1, IRAK1 and TRAF6. Interacts (via MATH domain) with GP6 and GP1BB. Interacts with EGFR (via C-terminal region); this interaction promotes the formation of EGFR asymmetric dimers. Interacts with PKM; this interaction promotes PKM kinase activity. In terms of processing, polyubiquitinated, leading to its proteasomal degradation. Ubiquitinated at Lys-263 by the SCF(FBXL2) complex, leading to its degradation by the proteasome. In terms of tissue distribution, expressed in epithelial cells of thymus, dendritic cells of lymph node, and in the basal cell layer of epithelia such as epidermis, nasopharynx, respiratory tract, salivary gland, and esophagus.

Its subcellular location is the cytoplasm. The protein resides in the nucleus. The protein localises to the perinuclear region. It is found in the cell junction. It localises to the tight junction. Its subcellular location is the cell membrane. The protein resides in the cytoskeleton. It carries out the reaction S-ubiquitinyl-[E2 ubiquitin-conjugating enzyme]-L-cysteine + [acceptor protein]-L-lysine = [E2 ubiquitin-conjugating enzyme]-L-cysteine + N(6)-ubiquitinyl-[acceptor protein]-L-lysine.. The protein operates within protein degradation; proteasomal ubiquitin-dependent pathway. In terms of biological role, adapter protein with E3 ligase activity that is involved in many diverse biological processes including cell proliferation, migration, differentiation, DNA repair, platelet activation or apoptosis. Promotes EGFR-mediated signaling by facilitating the dimerization of EGFR and downstream AKT activation thereby promoting cell proliferation. Ubiquitinates SMURF2 through 'Lys-48'-linked ubiquitin chain leading to SMURF2 degradation through the proteasome and subsequently osteogenic differentiation. Promotes 'Lys-63'-mediated ubiquitination of CHK1 which in turn activates cell cycle arrest and activation of DNA repair. In addition, promotes an atypical 'Lys-29'-linked ubiquitination at the C-terminal end of IRS1 which is crucial for insulin-like growth factor (IGF) signal transduction. Regulates activation of NF-kappa-B in response to signaling through Toll-like receptors. Required for normal skeleton development, and for normal development of the respiratory tract. Required for activation of RPS6KB1 in response to TNF signaling. Modulates TRAF6 functions. Inhibits adipogenic differentiation by activating pyruvate kinase PKM activity and subsequently the beta-catenin signaling pathway. This Homo sapiens (Human) protein is TNF receptor-associated factor 4 (TRAF4).